We begin with the raw amino-acid sequence, 229 residues long: ATP synthase subunit a 1 (229 aa).

6 consecutive transmembrane segments (helical) span residues Ala25–Ala45, Val86–Phe106, Asn111–Ile131, Phe142–Leu162, Leu181–Met201, and Gly202–Gln222.

It belongs to the ATPase A chain family. In terms of assembly, F-type ATPases have 2 components, CF(1) - the catalytic core - and CF(0) - the membrane proton channel. CF(1) has five subunits: alpha(3), beta(3), gamma(1), delta(1), epsilon(1). CF(0) has three main subunits: a(1), b(2) and c(9-12). The alpha and beta chains form an alternating ring which encloses part of the gamma chain. CF(1) is attached to CF(0) by a central stalk formed by the gamma and epsilon chains, while a peripheral stalk is formed by the delta and b chains.

The protein resides in the cell inner membrane. Functionally, key component of the proton channel; it plays a direct role in the translocation of protons across the membrane. The sequence is that of ATP synthase subunit a 1 from Pelobacter propionicus (strain DSM 2379 / NBRC 103807 / OttBd1).